We begin with the raw amino-acid sequence, 172 residues long: C-phycocyanin beta subunit (172 aa).

Position 72 is an N4-methylasparagine (asparagine 72). Residues cysteine 82 and cysteine 153 each contribute to the (2R,3E)-phycocyanobilin site.

Belongs to the phycobiliprotein family. As to quaternary structure, heterodimer of an alpha and a beta chain, which further assembles into trimers. The trimers assemble into hexamers, although these were not seen in the crystallographic studies. Part of 2 PBS rod complexes, the conventional CpcG-PBS rod and a photosystem I-specific CpcL-PBS rod, both of which include ferredoxin--NADP reductase (petH). Interacts with rod linker CpcC2 via the latter's N-terminal PBS-linker domain. Contains two covalently linked bilin chromophores.

It is found in the cellular thylakoid membrane. In terms of biological role, light-harvesting photosynthetic bile pigment-protein from the phycobiliprotein complex (phycobilisome, PBS). Phycocyanin is the major phycobiliprotein in the PBS rod. In Synechocystis sp. (strain ATCC 27184 / PCC 6803 / Kazusa), this protein is C-phycocyanin beta subunit (cpcB).